The primary structure comprises 184 residues: Lipid A acyltransferase PagP (184 aa).

The N-terminal stretch at 1–22 is a signal peptide; it reads MNIRHGIIAMSSTMLVPLAAEA. Residues histidine 57, aspartate 100, and serine 101 contribute to the active site.

The protein belongs to the lipid A palmitoyltransferase family. Homodimer.

The protein localises to the cell outer membrane. The catalysed reaction is a lipid A + a 1,2-diacyl-sn-glycero-3-phosphocholine = a hepta-acyl lipid A + a 2-acyl-sn-glycero-3-phosphocholine. It carries out the reaction a lipid IVA + a 1,2-diacyl-sn-glycero-3-phosphocholine = a lipid IVB + a 2-acyl-sn-glycero-3-phosphocholine. The enzyme catalyses a lipid IIA + a 1,2-diacyl-sn-glycero-3-phosphocholine = a lipid IIB + a 2-acyl-sn-glycero-3-phosphocholine. In terms of biological role, transfers a fatty acid residue from the sn-1 position of a phospholipid to the N-linked hydroxyfatty acid chain on the proximal unit of lipid A or its precursors. In Methylobacillus flagellatus (strain ATCC 51484 / DSM 6875 / VKM B-1610 / KT), this protein is Lipid A acyltransferase PagP.